A 472-amino-acid chain; its full sequence is Hepatocyte nuclear factor 3-alpha (472 aa).

The segment at residues 169–260 (AKPPYSYISL…GNMFENGCYL (92 aa)) is a DNA-binding region (fork-head). Positions 269-392 (EKQPGAGGGG…ESQLHLKGDP (124 aa)) are disordered. Positions 273 to 289 (GAGGGGGSGSGGSGAKG) are enriched in gly residues. Phosphoserine occurs at positions 307 and 331. 2 stretches are compositionally biased toward low complexity: residues 322–332 (GAPAPGPAASP) and 351–366 (TPAS…GPGA).

Binds DNA as a monomer. Interacts with FOXA2. Interacts with NKX2-1. Interacts with HDAC7. Interacts with the histone H3-H4 heterodimer. Associates with nucleosomes containing histone H2A. Interacts with AR. Interacts with NR0B2. As to expression, highly expressed in prostate and ESR1-positive breast tumors. Overexpressed in esophageal and lung adenocarcinomas.

The protein resides in the nucleus. Its function is as follows. Transcription factor that is involved in embryonic development, establishment of tissue-specific gene expression and regulation of gene expression in differentiated tissues. Is thought to act as a 'pioneer' factor opening the compacted chromatin for other proteins through interactions with nucleosomal core histones and thereby replacing linker histones at target enhancer and/or promoter sites. Binds DNA with the consensus sequence 5'-[AC]A[AT]T[AG]TT[GT][AG][CT]T[CT]-3'. Proposed to play a role in translating the epigenetic signatures into cell type-specific enhancer-driven transcriptional programs. Its differential recruitment to chromatin is dependent on distribution of histone H3 methylated at 'Lys-5' (H3K4me2) in estrogen-regulated genes. Involved in the development of multiple endoderm-derived organ systems such as liver, pancreas, lung and prostate; FOXA1 and FOXA2 seem to have at least in part redundant roles. Modulates the transcriptional activity of nuclear hormone receptors. Is involved in ESR1-mediated transcription; required for ESR1 binding to the NKX2-1 promoter in breast cancer cells; binds to the RPRM promoter and is required for the estrogen-induced repression of RPRM. Involved in regulation of apoptosis by inhibiting the expression of BCL2. Involved in cell cycle regulation by activating expression of CDKN1B, alone or in conjunction with BRCA1. Originally described as a transcription activator for a number of liver genes such as AFP, albumin, tyrosine aminotransferase, PEPCK, etc. Interacts with the cis-acting regulatory regions of these genes. Involved in glucose homeostasis. This chain is Hepatocyte nuclear factor 3-alpha (FOXA1), found in Homo sapiens (Human).